The primary structure comprises 735 residues: Phosphoribosylformylglycinamidine synthase subunit PurL (735 aa).

The active site involves histidine 44. ATP contacts are provided by tyrosine 47 and lysine 86. Glutamate 88 is a binding site for Mg(2+). Substrate-binding positions include serine 89–histidine 92 and arginine 111. Catalysis depends on histidine 90, which acts as the Proton acceptor. Residue aspartate 112 coordinates Mg(2+). Glutamine 240 is a substrate binding site. Position 268 (aspartate 268) interacts with Mg(2+). Glutamate 312–glutamine 314 is a substrate binding site. ATP is bound by residues aspartate 496 and glycine 533. Mg(2+) is bound at residue asparagine 534. Serine 536 is a binding site for substrate.

Belongs to the FGAMS family. Monomer. Part of the FGAM synthase complex composed of 1 PurL, 1 PurQ and 2 PurS subunits.

It is found in the cytoplasm. It carries out the reaction N(2)-formyl-N(1)-(5-phospho-beta-D-ribosyl)glycinamide + L-glutamine + ATP + H2O = 2-formamido-N(1)-(5-O-phospho-beta-D-ribosyl)acetamidine + L-glutamate + ADP + phosphate + H(+). It functions in the pathway purine metabolism; IMP biosynthesis via de novo pathway; 5-amino-1-(5-phospho-D-ribosyl)imidazole from N(2)-formyl-N(1)-(5-phospho-D-ribosyl)glycinamide: step 1/2. In terms of biological role, part of the phosphoribosylformylglycinamidine synthase complex involved in the purines biosynthetic pathway. Catalyzes the ATP-dependent conversion of formylglycinamide ribonucleotide (FGAR) and glutamine to yield formylglycinamidine ribonucleotide (FGAM) and glutamate. The FGAM synthase complex is composed of three subunits. PurQ produces an ammonia molecule by converting glutamine to glutamate. PurL transfers the ammonia molecule to FGAR to form FGAM in an ATP-dependent manner. PurS interacts with PurQ and PurL and is thought to assist in the transfer of the ammonia molecule from PurQ to PurL. The protein is Phosphoribosylformylglycinamidine synthase subunit PurL of Nitratiruptor sp. (strain SB155-2).